The chain runs to 160 residues: Large ribosomal subunit protein bL17 (160 aa).

The interval 128-160 (KKATKTRRSRKRKSADVVVEAAPAEETPKAAEE) is disordered. Basic residues predominate over residues 129-140 (KATKTRRSRKRK).

This sequence belongs to the bacterial ribosomal protein bL17 family. In terms of assembly, part of the 50S ribosomal subunit. Contacts protein L32.

The polypeptide is Large ribosomal subunit protein bL17 (Porphyromonas gingivalis (strain ATCC 33277 / DSM 20709 / CIP 103683 / JCM 12257 / NCTC 11834 / 2561)).